The chain runs to 370 residues: Allatostatins (370 aa).

A signal peptide spans 1–27 (MSGPRTCFCLPSALVLVLLSLSTSALG). A propeptide spanning residues 28–65 (TAPEPSGVHEESPAGGGTDLLPHPEDLSASDNPDLEFV) is cleaved from the precursor. The interval 29-58 (APEPSGVHEESPAGGGTDLLPHPEDLSASD) is disordered. Leucine amide is present on residues Leu73, Leu94, Leu105, and Leu117. The propeptide occupies 121-151 (DYDYYGEEDEDDQQAIGDEDIEESDVGDLMD). 6 positions are modified to leucine amide: Leu161, Leu172, Leu188, Leu200, Leu213, and Leu232. Positions 236–251 (SDDIDFRELEEKFAED) are excised as a propeptide. Leu264 is modified (leucine amide). A propeptide spanning residues 268–345 (EVEPSELEAV…ITPEEFSRMV (78 aa)) is cleaved from the precursor. The interval 273-298 (ELEAVRNEEKDNSSVHDKKNNTNDMH) is disordered. Residue Leu353 is modified to Leucine amide. Ile364 carries the post-translational modification Isoleucine amide. The propeptide occupies 368–370 (SER).

Belongs to the allatostatin family. In terms of tissue distribution, brain, subesophageal ganglion and corpus allatum.

The protein localises to the secreted. Functionally, neuropeptide inhibitors of juvenile hormone synthesis and gut muscle contraction. The sequence is that of Allatostatins from Diploptera punctata (Pacific beetle cockroach).